Reading from the N-terminus, the 523-residue chain is Occludin (523 aa).

Positions 1 to 20 are disordered; the sequence is MSVRPFESPPPYRPDEFKPN. Residues 1–66 lie on the Cytoplasmic side of the membrane; sequence MSVRPFESPP…KWTSPPGVIR (66 aa). The 210-residue stretch at 60 to 269 folds into the MARVEL domain; the sequence is SPPGVIRILS…IIVFAVKTRR (210 aa). A helical membrane pass occupies residues 67-87; that stretch reads ILSMLVIVMCIAVFACVASTL. The Extracellular portion of the chain corresponds to 88–140; that stretch reads AWDRAYGTGIFGGSMNYPYGSGFGSYGGGFGGYGYGYGYGYGGYTDPRAAKGF. Residues 141–161 form a helical membrane-spanning segment; sequence LLAMAAFCFIASLVIFVTSVI. At 162–173 the chain is on the cytoplasmic side; sequence RSGMSRTRRYYL. Residues 174–194 form a helical membrane-spanning segment; the sequence is IVIIVSAILGIMVFIATIVYI. Residues 195–244 are Extracellular-facing; sequence MGVNPTAQASGSMYGSQIYTICSQFYTPGGTGLYVDQYLYHYCVVDPQEA. Cys216 and Cys237 are oxidised to a cystine. The chain crosses the membrane as a helical span at residues 245–265; the sequence is IAIVLGFMIIVAFALIIVFAV. At 266-523 the chain is on the cytoplasmic side; it reads KTRRKMDRYD…MVGDYDRRKT (258 aa). Ser302 carries the phosphoserine modification. The tract at residues 302–338 is disordered; sequence SAGTQDMPPPPSDYAERVDSPMAYSSNGKVNGKRSYP. Phosphothreonine is present on Thr305. Ser313, Ser321, Ser340, and Ser360 each carry phosphoserine. The disordered stretch occupies residues 363-408; sequence DFRQPRYSSNDNLETPSKRTPTKGKAGKAKRTDPDHYETDYTTGGE. Over residues 368 to 381 the composition is skewed to polar residues; the sequence is RYSSNDNLETPSKR. At Tyr369 the chain carries Phosphotyrosine. 2 positions are modified to phosphoserine: Ser370 and Ser371. The span at 382 to 391 shows a compositional bias: basic residues; sequence TPTKGKAGKA. The segment covering 392-401 has biased composition (basic and acidic residues); sequence KRTDPDHYET. Phosphotyrosine is present on residues Tyr399 and Tyr403. 2 positions are modified to phosphothreonine; by PKC/PRKCH: Thr404 and Thr405. A Phosphoserine modification is found at Ser409. The 109-residue stretch at 415 to 523 folds into the OCEL domain; the sequence is EDWLREYPPI…MVGDYDRRKT (109 aa). A coiled-coil region spans residues 433–489; it reads YKRNFDAGLQEYKSLLAELDEVNKELSRLDRELDDYREESEEYMAAADEYNRLKQVK. Phosphoserine is present on Ser491.

This sequence belongs to the ELL/occludin family. As to quaternary structure, interacts with TJP1/ZO1. Interacts with VAPA. Interacts with CLDN1, CLDN6, CLDN9, CLDN11, CLDN12 and CLDN17. Interacts with PLSCR1. Interacts with LSR, ILDR1 and ILDR2. Interacts with TJP2/ZO2. In terms of processing, dephosphorylated by PTPRJ.

It is found in the cell membrane. The protein localises to the cell junction. Its subcellular location is the tight junction. Functionally, may play a role in the formation and regulation of the tight junction (TJ) paracellular permeability barrier. May be involved in the organization of actin in endothelial cells. The sequence is that of Occludin (Ocln) from Rattus norvegicus (Rat).